Reading from the N-terminus, the 281-residue chain is CDAN1-interacting nuclease 1 (281 aa).

The residue at position 114 (Thr114) is a Phosphothreonine.

It is found in the nucleus. The protein localises to the cytoplasm. Plays a role in erythroid cell differentiation. The protein is CDAN1-interacting nuclease 1 of Homo sapiens (Human).